The chain runs to 109 residues: ATP synthase subunit c (109 aa).

2 consecutive transmembrane segments (helical) span residues 42–62 and 88–108; these read YIGT…QGFS and LALA…IIFV.

Belongs to the ATPase C chain family. As to quaternary structure, F-type ATPases have 2 components, F(1) - the catalytic core - and F(0) - the membrane proton channel. F(1) has five subunits: alpha(3), beta(3), gamma(1), delta(1), epsilon(1). F(0) has three main subunits: a(1), b(2) and c(10-14). The alpha and beta chains form an alternating ring which encloses part of the gamma chain. F(1) is attached to F(0) by a central stalk formed by the gamma and epsilon chains, while a peripheral stalk is formed by the delta and b chains.

Its subcellular location is the cell membrane. F(1)F(0) ATP synthase produces ATP from ADP in the presence of a proton or sodium gradient. F-type ATPases consist of two structural domains, F(1) containing the extramembraneous catalytic core and F(0) containing the membrane proton channel, linked together by a central stalk and a peripheral stalk. During catalysis, ATP synthesis in the catalytic domain of F(1) is coupled via a rotary mechanism of the central stalk subunits to proton translocation. Its function is as follows. Key component of the F(0) channel; it plays a direct role in translocation across the membrane. A homomeric c-ring of between 10-14 subunits forms the central stalk rotor element with the F(1) delta and epsilon subunits. This Ureaplasma parvum serovar 3 (strain ATCC 27815 / 27 / NCTC 11736) protein is ATP synthase subunit c.